The following is a 339-amino-acid chain: MTQAQTAAVQPDAIPVAAPTPQRWRVADVVALFELPFNDLMFRAQQVHREHFDANAVQLSTLLSIKTGGCEEDCGYCSQSSHHDTGLKAEKLMDVDAVLEAARAAKASGASRFCMGAAWRNPKERHMPALTEMVRGVKELGLETCMTLGMLEDEQAQQLAHAGLDYYNHNLDTSPEFYGQVISTRTYQDRLDTLDRVRDAGINVCCGGIIGMGESRRERAGLISQLANLNPYPDSVPINNLVAIEGTPLEGTAPLDPFEFVRTIAVARITMPKAVVRLSAGREQLDDGLQALCFLAGANSMFYGDQLLTTSNPQSQKDRALFERLGMRASDADAMSADA.

Positions asparagine 55 to arginine 282 constitute a Radical SAM core domain. [4Fe-4S] cluster is bound by residues cysteine 70, cysteine 74, and cysteine 77. [2Fe-2S] cluster-binding residues include cysteine 114, cysteine 145, cysteine 205, and arginine 277.

It belongs to the radical SAM superfamily. Biotin synthase family. Homodimer. Requires [4Fe-4S] cluster as cofactor. [2Fe-2S] cluster serves as cofactor.

It carries out the reaction (4R,5S)-dethiobiotin + (sulfur carrier)-SH + 2 reduced [2Fe-2S]-[ferredoxin] + 2 S-adenosyl-L-methionine = (sulfur carrier)-H + biotin + 2 5'-deoxyadenosine + 2 L-methionine + 2 oxidized [2Fe-2S]-[ferredoxin]. The protein operates within cofactor biosynthesis; biotin biosynthesis; biotin from 7,8-diaminononanoate: step 2/2. In terms of biological role, catalyzes the conversion of dethiobiotin (DTB) to biotin by the insertion of a sulfur atom into dethiobiotin via a radical-based mechanism. This is Biotin synthase from Burkholderia vietnamiensis (strain G4 / LMG 22486) (Burkholderia cepacia (strain R1808)).